We begin with the raw amino-acid sequence, 339 residues long: NADH-quinone oxidoreductase subunit H (339 aa).

The next 9 helical transmembrane spans lie at 10–30 (FPLT…ILCV), 50–70 (PNVV…KLLF), 82–102 (ILFI…WAVI), 115–135 (VGVL…IIAG), 161–181 (MGLV…SGII), 187–207 (LPWW…ISVL), 235–255 (MGFA…SAMT), 275–295 (IPGF…FLWI), and 311–331 (GWKV…SVLF).

Belongs to the complex I subunit 1 family. In terms of assembly, NDH-1 is composed of 14 different subunits. Subunits NuoA, H, J, K, L, M, N constitute the membrane sector of the complex.

It localises to the cell inner membrane. It carries out the reaction a quinone + NADH + 5 H(+)(in) = a quinol + NAD(+) + 4 H(+)(out). In terms of biological role, NDH-1 shuttles electrons from NADH, via FMN and iron-sulfur (Fe-S) centers, to quinones in the respiratory chain. The immediate electron acceptor for the enzyme in this species is believed to be ubiquinone. Couples the redox reaction to proton translocation (for every two electrons transferred, four hydrogen ions are translocated across the cytoplasmic membrane), and thus conserves the redox energy in a proton gradient. This subunit may bind ubiquinone. The polypeptide is NADH-quinone oxidoreductase subunit H (Rickettsia prowazekii (strain Madrid E)).